Reading from the N-terminus, the 319-residue chain is Acetyl-coenzyme A carboxylase carboxyl transferase subunit beta, chloroplastic (319 aa).

Residues 47–319 enclose the CoA carboxyltransferase N-terminal domain; the sequence is LWVQCDNCES…ELFYVLQSSS (273 aa). Residues Cys51, Cys54, Cys70, and Cys73 each coordinate Zn(2+). Residues 51–73 form a C4-type zinc finger; the sequence is CDNCESLLYIRFLRENKSVCEEC.

It belongs to the AccD/PCCB family. Acetyl-CoA carboxylase is a heterohexamer composed of biotin carboxyl carrier protein, biotin carboxylase and 2 subunits each of ACCase subunit alpha and ACCase plastid-coded subunit beta (accD). It depends on Zn(2+) as a cofactor.

The protein localises to the plastid. The protein resides in the chloroplast stroma. It catalyses the reaction N(6)-carboxybiotinyl-L-lysyl-[protein] + acetyl-CoA = N(6)-biotinyl-L-lysyl-[protein] + malonyl-CoA. The protein operates within lipid metabolism; malonyl-CoA biosynthesis; malonyl-CoA from acetyl-CoA: step 1/1. Its function is as follows. Component of the acetyl coenzyme A carboxylase (ACC) complex. Biotin carboxylase (BC) catalyzes the carboxylation of biotin on its carrier protein (BCCP) and then the CO(2) group is transferred by the transcarboxylase to acetyl-CoA to form malonyl-CoA. This Picea abies (Norway spruce) protein is Acetyl-coenzyme A carboxylase carboxyl transferase subunit beta, chloroplastic.